The primary structure comprises 143 residues: Large ribosomal subunit protein uL15 (143 aa).

Residues 20–52 form a disordered region; sequence GRGIGSGKGKTAGRGHKGQHSRAGGYHKVGFEG. Residues 30 to 39 are compositionally biased toward basic residues; the sequence is TAGRGHKGQH.

This sequence belongs to the universal ribosomal protein uL15 family. As to quaternary structure, part of the 50S ribosomal subunit.

In terms of biological role, binds to the 23S rRNA. In Coxiella burnetii (strain CbuG_Q212) (Coxiella burnetii (strain Q212)), this protein is Large ribosomal subunit protein uL15.